A 377-amino-acid polypeptide reads, in one-letter code: Beta sliding clamp (377 aa).

The protein belongs to the beta sliding clamp family. As to quaternary structure, forms a ring-shaped head-to-tail homodimer around DNA which binds and tethers DNA polymerases and other proteins to the DNA. The DNA replisome complex has a single clamp-loading complex (3 tau and 1 each of delta, delta', psi and chi subunits) which binds 3 Pol III cores (1 core on the leading strand and 2 on the lagging strand) each with a beta sliding clamp dimer. Additional proteins in the replisome are other copies of gamma, psi and chi, Ssb, DNA helicase and RNA primase.

Its subcellular location is the cytoplasm. Its function is as follows. Confers DNA tethering and processivity to DNA polymerases and other proteins. Acts as a clamp, forming a ring around DNA (a reaction catalyzed by the clamp-loading complex) which diffuses in an ATP-independent manner freely and bidirectionally along dsDNA. Initially characterized for its ability to contact the catalytic subunit of DNA polymerase III (Pol III), a complex, multichain enzyme responsible for most of the replicative synthesis in bacteria; Pol III exhibits 3'-5' exonuclease proofreading activity. The beta chain is required for initiation of replication as well as for processivity of DNA replication. In Staphylococcus aureus (strain COL), this protein is Beta sliding clamp (dnaN).